A 597-amino-acid chain; its full sequence is MKHIRNFSIIAHIDHGKSTLSDRLIQTCGGLSSREMQAQVLDSMDLERERGITIKAQSVTLNYQAQDGNTYQLNFIDTPGHVDFSYEVSRSLAACEGALLVVDAGQGVEAQTLANCYTAMEMELEVVPVLNKIDLPAAEPERVAEEIEDIVGIDAIDAVRCSAKTGLGVDLVLEEIVARIPAPVGDPDAPLQALIIDSWFDSYLGVVSLVRIKNGSLKKNDKIKVMSTGQVWGVDRIGIFTPKQVDTQGLGCGEVGWVVCGIKDIHGAPVGDTLTQAKNGAEKALAGFKKVKPQVYAGLFPISSDDYESFRDALDKLSLNDASLFFEPESSTALGFGFRCGFLGMLHMEIIQERLEREYDLDLITTAPTVVYEIELNDGSTIHIDSPSAMPPVNNIKEMREPIAECNILLPQEYMGNVITLCIEKRGVQTNMVYHGNQVALTYEIPMAEVVLDFFDRLKSTSRGYASLDYGFKRFETSEMVRLDIMINGERVDALAIITHKENAQYRGRQVVEKMRELIPRQMFDIAIQASIGNQIIARSTVKALRKDVTAKCYGGDVSRKKKLLNKQKEGKKRMKSLGRVDVPQEAFLAILHVGKD.

Positions 2–184 constitute a tr-type G domain; it reads KHIRNFSIIA…EIVARIPAPV (183 aa). GTP is bound by residues 14-19 and 131-134; these read DHGKST and NKID.

Belongs to the TRAFAC class translation factor GTPase superfamily. Classic translation factor GTPase family. LepA subfamily.

The protein resides in the cell inner membrane. The enzyme catalyses GTP + H2O = GDP + phosphate + H(+). Its function is as follows. Required for accurate and efficient protein synthesis under certain stress conditions. May act as a fidelity factor of the translation reaction, by catalyzing a one-codon backward translocation of tRNAs on improperly translocated ribosomes. Back-translocation proceeds from a post-translocation (POST) complex to a pre-translocation (PRE) complex, thus giving elongation factor G a second chance to translocate the tRNAs correctly. Binds to ribosomes in a GTP-dependent manner. This Aeromonas salmonicida (strain A449) protein is Elongation factor 4.